A 256-amino-acid polypeptide reads, in one-letter code: DNA repair protein RecO (256 aa).

Belongs to the RecO family.

In terms of biological role, involved in DNA repair and RecF pathway recombination. This Rhizobium leguminosarum bv. trifolii (strain WSM2304) protein is DNA repair protein RecO.